The following is a 128-amino-acid chain: MAFTGKFEMESEKNYDEFMKLLGLPSDVVEKSRNIKIVTEIKQDGQDFTWSHHYSGGQIMTNKFTIGKESEIQTFGGKKFKAVVNMEGGKVVANFPNYQHTSEIKGDKLVEVSSIGGVTYERVSKRLA.

Alanine 2 is subject to N-acetylalanine.

It belongs to the calycin superfamily. Fatty-acid binding protein (FABP) family. As to expression, expressed in ileum.

It is found in the cytoplasm. It localises to the membrane. In terms of biological role, binds to bile acids and is involved in enterohepatic bile acid metabolism. Required for efficient apical to basolateral transport of conjugated bile acids in ileal enterocytes. Stimulates gastric acid and pepsinogen secretion. This Oryctolagus cuniculus (Rabbit) protein is Gastrotropin (FABP6).